The sequence spans 786 residues: Endonuclease MutS2 (786 aa).

ATP is bound at residue 333 to 340 (GPNTGGKT). The segment at 682–709 (EKIKPSKQSAAQRPVVKVSGGGMSGPST) is disordered. The Smr domain occupies 711-786 (LDLRGERYDQ…GSGATIVNFK (76 aa)).

This sequence belongs to the DNA mismatch repair MutS family. MutS2 subfamily. In terms of assembly, homodimer. Binds to stalled ribosomes, contacting rRNA.

In terms of biological role, endonuclease that is involved in the suppression of homologous recombination and thus may have a key role in the control of bacterial genetic diversity. Functionally, acts as a ribosome collision sensor, splitting the ribosome into its 2 subunits. Detects stalled/collided 70S ribosomes which it binds and splits by an ATP-hydrolysis driven conformational change. Acts upstream of the ribosome quality control system (RQC), a ribosome-associated complex that mediates the extraction of incompletely synthesized nascent chains from stalled ribosomes and their subsequent degradation. Probably generates substrates for RQC. This is Endonuclease MutS2 from Lacticaseibacillus casei (strain BL23) (Lactobacillus casei).